The sequence spans 458 residues: F-box/FBD/LRR-repeat protein At1g78750 (458 aa).

The F-box domain occupies 17 to 67 (VDWISNLPETLLCQVLFYLPTKDVVKSSVLSSRWRNLWKYVPGFNLSYCDF). LRR repeat units lie at residues 152 to 183 (CETL…HLSI), 184 to 209 (VKFA…NINR), 231 to 258 (VADT…RLSD), 302 to 327 (DFLV…YDYS), and 345 to 370 (FYGY…VVGS). The FBD domain occupies 376-428 (KEGINILSVPRGFLSSLEYVKIERPLKGEAMEMKLVSYLLENSTILKKLTLCL).

This chain is F-box/FBD/LRR-repeat protein At1g78750, found in Arabidopsis thaliana (Mouse-ear cress).